A 293-amino-acid chain; its full sequence is Ribosomal RNA small subunit methyltransferase A (293 aa).

Residues Asn29, Leu31, Gly56, Glu77, Asp102, and Asn127 each contribute to the S-adenosyl-L-methionine site.

It belongs to the class I-like SAM-binding methyltransferase superfamily. rRNA adenine N(6)-methyltransferase family. RsmA subfamily.

Its subcellular location is the cytoplasm. It catalyses the reaction adenosine(1518)/adenosine(1519) in 16S rRNA + 4 S-adenosyl-L-methionine = N(6)-dimethyladenosine(1518)/N(6)-dimethyladenosine(1519) in 16S rRNA + 4 S-adenosyl-L-homocysteine + 4 H(+). Specifically dimethylates two adjacent adenosines (A1518 and A1519) in the loop of a conserved hairpin near the 3'-end of 16S rRNA in the 30S particle. May play a critical role in biogenesis of 30S subunits. This Lysinibacillus sphaericus (strain C3-41) protein is Ribosomal RNA small subunit methyltransferase A.